The primary structure comprises 332 residues: Tryptophan--tRNA ligase (332 aa).

ATP contacts are provided by residues 11-13 and 19-20; these read QPS and GN. The short motif at 12–20 is the 'HIGH' region element; it reads PSGELTIGN. D135 is an L-tryptophan binding site. Residues 147–149, V186, and 195–199 each bind ATP; these read GQD and KMSKS. The 'KMSKS' region signature appears at 195-199; it reads KMSKS.

The protein belongs to the class-I aminoacyl-tRNA synthetase family. As to quaternary structure, homodimer.

It is found in the cytoplasm. It catalyses the reaction tRNA(Trp) + L-tryptophan + ATP = L-tryptophyl-tRNA(Trp) + AMP + diphosphate + H(+). Its function is as follows. Catalyzes the attachment of tryptophan to tRNA(Trp). This Shewanella oneidensis (strain ATCC 700550 / JCM 31522 / CIP 106686 / LMG 19005 / NCIMB 14063 / MR-1) protein is Tryptophan--tRNA ligase.